Consider the following 116-residue polypeptide: Large ribosomal subunit protein bL20c (116 aa).

This sequence belongs to the bacterial ribosomal protein bL20 family.

It localises to the plastid. The protein resides in the chloroplast. Its function is as follows. Binds directly to 23S ribosomal RNA and is necessary for the in vitro assembly process of the 50S ribosomal subunit. It is not involved in the protein synthesizing functions of that subunit. This is Large ribosomal subunit protein bL20c from Ipomoea purpurea (Common morning glory).